A 212-amino-acid chain; its full sequence is Adenylate kinase (212 aa).

10–15 (GAGKGT) serves as a coordination point for ATP. The segment at 30–59 (AIGDIFRAIIKTSSKDAEVINSYVEQGKLI) is NMP. AMP-binding positions include Arg-36, 57-59 (KLI), 85-88 (GYPR), and Gln-92. Residues 122 to 160 (GRYSCKSCGKIYNDYFLKPRIDKICDVCKSSVFEYRKDD) form an LID region. ATP is bound at residue Arg-123. The Zn(2+) site is built by Cys-126 and Cys-129. 132-133 (IY) lines the ATP pocket. 2 residues coordinate Zn(2+): Cys-146 and Cys-149. Positions 157 and 168 each coordinate AMP. Lys-196 provides a ligand contact to ATP.

Belongs to the adenylate kinase family. As to quaternary structure, monomer.

The protein resides in the cytoplasm. It carries out the reaction AMP + ATP = 2 ADP. Its pathway is purine metabolism; AMP biosynthesis via salvage pathway; AMP from ADP: step 1/1. Functionally, catalyzes the reversible transfer of the terminal phosphate group between ATP and AMP. Plays an important role in cellular energy homeostasis and in adenine nucleotide metabolism. The chain is Adenylate kinase from Rickettsia bellii (strain RML369-C).